We begin with the raw amino-acid sequence, 118 residues long: Large ribosomal subunit protein uL18 (118 aa).

Belongs to the universal ribosomal protein uL18 family. As to quaternary structure, part of the 50S ribosomal subunit; part of the 5S rRNA/L5/L18/L25 subcomplex. Contacts the 5S and 23S rRNAs.

This is one of the proteins that bind and probably mediate the attachment of the 5S RNA into the large ribosomal subunit, where it forms part of the central protuberance. The chain is Large ribosomal subunit protein uL18 from Rhizorhabdus wittichii (strain DSM 6014 / CCUG 31198 / JCM 15750 / NBRC 105917 / EY 4224 / RW1) (Sphingomonas wittichii).